The following is a 510-amino-acid chain: 2,3-bisphosphoglycerate-independent phosphoglycerate mutase (510 aa).

2 residues coordinate Mn(2+): Asp10 and Ser60. Residue Ser60 is the Phosphoserine intermediate of the active site. Residues His121, 150-151 (RD), Arg182, Arg188, 252-255 (RPDR), and Lys325 contribute to the substrate site. 5 residues coordinate Mn(2+): Asp392, His396, Asp433, His434, and His451.

Belongs to the BPG-independent phosphoglycerate mutase family. Mn(2+) is required as a cofactor.

It is found in the plastid. The protein localises to the chloroplast. The catalysed reaction is (2R)-2-phosphoglycerate = (2R)-3-phosphoglycerate. It participates in carbohydrate degradation; glycolysis; pyruvate from D-glyceraldehyde 3-phosphate: step 3/5. Functionally, catalyzes the interconversion of 2-phosphoglycerate and 3-phosphoglycerate. In Gracilaria tenuistipitata var. liui (Red alga), this protein is 2,3-bisphosphoglycerate-independent phosphoglycerate mutase.